A 930-amino-acid chain; its full sequence is Isoleucine--tRNA ligase (930 aa).

Positions 57–67 (PYANGNIHVGH) match the 'HIGH' region motif. L-isoleucyl-5'-AMP is bound at residue Glu-554. Positions 595–599 (KMSKS) match the 'KMSKS' region motif. Residue Lys-598 participates in ATP binding. Zn(2+) contacts are provided by Cys-888, Cys-891, Cys-908, and Cys-911.

It belongs to the class-I aminoacyl-tRNA synthetase family. IleS type 1 subfamily. Monomer. Zn(2+) is required as a cofactor.

The protein resides in the cytoplasm. It catalyses the reaction tRNA(Ile) + L-isoleucine + ATP = L-isoleucyl-tRNA(Ile) + AMP + diphosphate. Functionally, catalyzes the attachment of isoleucine to tRNA(Ile). As IleRS can inadvertently accommodate and process structurally similar amino acids such as valine, to avoid such errors it has two additional distinct tRNA(Ile)-dependent editing activities. One activity is designated as 'pretransfer' editing and involves the hydrolysis of activated Val-AMP. The other activity is designated 'posttransfer' editing and involves deacylation of mischarged Val-tRNA(Ile). The protein is Isoleucine--tRNA ligase of Streptococcus mutans serotype c (strain ATCC 700610 / UA159).